A 181-amino-acid chain; its full sequence is Adenylate kinase (181 aa).

10-15 (GAGKGT) provides a ligand contact to ATP. The interval 30 to 59 (STGDLFRANIGEGTPLGIEAKQYIDAGKLV) is NMP. Residues Thr-31, Arg-36, 57-59 (KLV), 85-88 (GFPR), and Gln-92 each bind AMP. The tract at residues 126-132 (SRGRADD) is LID. Arg-127 is an ATP binding site. 2 residues coordinate AMP: Arg-129 and Arg-140. Gly-166 provides a ligand contact to ATP.

This sequence belongs to the adenylate kinase family. In terms of assembly, monomer.

The protein resides in the cytoplasm. It carries out the reaction AMP + ATP = 2 ADP. It functions in the pathway purine metabolism; AMP biosynthesis via salvage pathway; AMP from ADP: step 1/1. Its function is as follows. Catalyzes the reversible transfer of the terminal phosphate group between ATP and AMP. Plays an important role in cellular energy homeostasis and in adenine nucleotide metabolism. The polypeptide is Adenylate kinase (Corynebacterium glutamicum (strain R)).